The sequence spans 612 residues: Peroxisomal targeting signal receptor (612 aa).

Residue Met1 is modified to N-acetylmethionine. The segment at Met1 to Lys24 is disordered. Cys6 participates in a covalent cross-link: Glycyl cysteine thioester (Cys-Gly) (interchain with G-Cter in ubiquitin). Positions Ser7–Asn29 are amphipathic helix 1 (AH1). Glycyl lysine isopeptide (Lys-Gly) (interchain with G-Cter in ubiquitin) cross-links involve residues Lys18 and Lys24. At Ser61 the chain carries Phosphoserine. Residues Asn64 to Ser97 form a TPR 1 repeat. The tract at residues Arg70 to Thr104 is amphipathic helix 2 (AH2). Residues Trp120–Phe124 carry the WxxxF/Y motif 1 motif. Residues Ser129 to Ala151 form a disordered region. The segment at Pro158–Ser174 is amphipathic helix 3 (AH3). The tract at residues Ala182–Gln202 is disordered. The short motif at Trp204–Phe208 is the WxxxF/Y motif 2 element. Residues Phe257–Pro273 are amphipathic helix 4 (AH4). TPR repeat units follow at residues Pro313 to His346, Val347 to Asn380, Leu381 to Arg418, Ile419 to Asp456, Pro457 to Asp490, Glu491 to Phe524, and Val525 to Asn558.

Belongs to the peroxisomal targeting signal receptor family. As to quaternary structure, interacts (via WxxxF/Y and LVxEF motifs) with PEX14; promoting translocation through the PEX13-PEX14 docking complex. In terms of processing, monoubiquitinated at Cys-6 by PEX2 during PEX5 passage through the retrotranslocation channel: monoubiquitination acts as a signal for PEX5 extraction and is required for proper export from peroxisomes and recycling. Ubiquitination at Cys-6 is UBC4-independent but requires the presence of PEX4. When PEX5 recycling is compromised, polyubiquitinated at Lys-18 and Lys-24 by PEX10 during its passage through the retrotranslocation channel, leading to its degradation. Ubiquitination at Lys-18 and Lys-24 are UBC4-dependent. Monoubiquitination at Cys-6 and polyubiquitination at Lys-18 and Lys-24 are removed by UBP15 in the cytosol, resetting PEX5 for a subsequent import cycle.

It is found in the cytoplasm. The protein resides in the cytosol. The protein localises to the peroxisome matrix. Functionally, receptor that mediates peroxisomal import of proteins containing a C-terminal PTS1-type tripeptide peroxisomal targeting signal (SKL-type). Binds to cargo proteins containing a PTS1 peroxisomal targeting signal in the cytosol, and translocates them into the peroxisome matrix by passing through the PEX13-PEX14 docking complex along with cargo proteins. PEX5 receptor is then retrotranslocated into the cytosol, leading to release of bound cargo in the peroxisome matrix, and reset for a subsequent peroxisome import cycle. This is Peroxisomal targeting signal receptor from Saccharomyces cerevisiae (strain ATCC 204508 / S288c) (Baker's yeast).